A 249-amino-acid polypeptide reads, in one-letter code: Pyridoxine 5'-phosphate synthase (249 aa).

Position 7 (Asn-7) interacts with 3-amino-2-oxopropyl phosphate. Position 9–10 (9–10 (DH)) interacts with 1-deoxy-D-xylulose 5-phosphate. Residue Arg-18 participates in 3-amino-2-oxopropyl phosphate binding. The active-site Proton acceptor is the His-43. 1-deoxy-D-xylulose 5-phosphate-binding residues include Arg-45 and His-50. Glu-70 serves as the catalytic Proton acceptor. A 1-deoxy-D-xylulose 5-phosphate-binding site is contributed by Thr-100. His-190 (proton donor) is an active-site residue. Residues Gly-191 and 212-213 (GH) contribute to the 3-amino-2-oxopropyl phosphate site.

The protein belongs to the PNP synthase family. Homooctamer; tetramer of dimers.

The protein resides in the cytoplasm. The catalysed reaction is 3-amino-2-oxopropyl phosphate + 1-deoxy-D-xylulose 5-phosphate = pyridoxine 5'-phosphate + phosphate + 2 H2O + H(+). The protein operates within cofactor biosynthesis; pyridoxine 5'-phosphate biosynthesis; pyridoxine 5'-phosphate from D-erythrose 4-phosphate: step 5/5. Functionally, catalyzes the complicated ring closure reaction between the two acyclic compounds 1-deoxy-D-xylulose-5-phosphate (DXP) and 3-amino-2-oxopropyl phosphate (1-amino-acetone-3-phosphate or AAP) to form pyridoxine 5'-phosphate (PNP) and inorganic phosphate. In Synechococcus sp. (strain CC9605), this protein is Pyridoxine 5'-phosphate synthase.